A 236-amino-acid polypeptide reads, in one-letter code: Small ribosomal subunit protein eS6 (236 aa).

A phosphoserine mark is found at Ser-232 and Ser-233.

It belongs to the eukaryotic ribosomal protein eS6 family. Post-translationally, phosphorylated.

This is Small ribosomal subunit protein eS6 (RPS6) from Kluyveromyces lactis (strain ATCC 8585 / CBS 2359 / DSM 70799 / NBRC 1267 / NRRL Y-1140 / WM37) (Yeast).